Here is a 141-residue protein sequence, read N- to C-terminus: Large ribosomal subunit protein uL11 (141 aa).

It belongs to the universal ribosomal protein uL11 family. As to quaternary structure, part of the ribosomal stalk of the 50S ribosomal subunit. Interacts with L10 and the large rRNA to form the base of the stalk. L10 forms an elongated spine to which L12 dimers bind in a sequential fashion forming a multimeric L10(L12)X complex. In terms of processing, one or more lysine residues are methylated.

In terms of biological role, forms part of the ribosomal stalk which helps the ribosome interact with GTP-bound translation factors. The chain is Large ribosomal subunit protein uL11 from Syntrophomonas wolfei subsp. wolfei (strain DSM 2245B / Goettingen).